A 150-amino-acid polypeptide reads, in one-letter code: Ribonuclease H (150 aa).

One can recognise an RNase H type-1 domain in the interval 3–144 (GEDIVEIYTD…ADALARQGMA (142 aa)). Asp12, Glu50, Asp72, and Asp136 together coordinate Mg(2+).

It belongs to the RNase H family. As to quaternary structure, monomer. It depends on Mg(2+) as a cofactor.

The protein localises to the cytoplasm. It carries out the reaction Endonucleolytic cleavage to 5'-phosphomonoester.. Functionally, endonuclease that specifically degrades the RNA of RNA-DNA hybrids. The polypeptide is Ribonuclease H (Parvibaculum lavamentivorans (strain DS-1 / DSM 13023 / NCIMB 13966)).